The sequence spans 365 residues: UDP-N-acetylglucosamine--N-acetylmuramyl-(pentapeptide) pyrophosphoryl-undecaprenol N-acetylglucosamine transferase (365 aa).

Residues 10 to 12 (TAG), Asn-124, Arg-161, Ser-195, Ile-248, and Gln-292 contribute to the UDP-N-acetyl-alpha-D-glucosamine site.

It belongs to the glycosyltransferase 28 family. MurG subfamily.

The protein resides in the cell membrane. It carries out the reaction di-trans,octa-cis-undecaprenyl diphospho-N-acetyl-alpha-D-muramoyl-L-alanyl-D-glutamyl-meso-2,6-diaminopimeloyl-D-alanyl-D-alanine + UDP-N-acetyl-alpha-D-glucosamine = di-trans,octa-cis-undecaprenyl diphospho-[N-acetyl-alpha-D-glucosaminyl-(1-&gt;4)]-N-acetyl-alpha-D-muramoyl-L-alanyl-D-glutamyl-meso-2,6-diaminopimeloyl-D-alanyl-D-alanine + UDP + H(+). It participates in cell wall biogenesis; peptidoglycan biosynthesis. Functionally, cell wall formation. Catalyzes the transfer of a GlcNAc subunit on undecaprenyl-pyrophosphoryl-MurNAc-pentapeptide (lipid intermediate I) to form undecaprenyl-pyrophosphoryl-MurNAc-(pentapeptide)GlcNAc (lipid intermediate II). The sequence is that of UDP-N-acetylglucosamine--N-acetylmuramyl-(pentapeptide) pyrophosphoryl-undecaprenol N-acetylglucosamine transferase from Nocardioides sp. (strain ATCC BAA-499 / JS614).